Reading from the N-terminus, the 262-residue chain is Phosphatidylglycerol--prolipoprotein diacylglyceryl transferase (262 aa).

4 helical membrane-spanning segments follow: residues 9 to 29 (LGPL…ILAV), 41 to 61 (IIPD…ILGA), 80 to 100 (IFAI…GALV), and 109 to 129 (LINT…AQSL). Arginine 131 is a binding site for a 1,2-diacyl-sn-glycero-3-phospho-(1'-sn-glycerol). Transmembrane regions (helical) follow at residues 167–187 (QPTF…ILIF), 197–217 (GHIT…IEGM), and 226–246 (GFRV…MIVI).

The protein belongs to the Lgt family.

It localises to the cell membrane. The enzyme catalyses L-cysteinyl-[prolipoprotein] + a 1,2-diacyl-sn-glycero-3-phospho-(1'-sn-glycerol) = an S-1,2-diacyl-sn-glyceryl-L-cysteinyl-[prolipoprotein] + sn-glycerol 1-phosphate + H(+). It functions in the pathway protein modification; lipoprotein biosynthesis (diacylglyceryl transfer). Functionally, catalyzes the transfer of the diacylglyceryl group from phosphatidylglycerol to the sulfhydryl group of the N-terminal cysteine of a prolipoprotein, the first step in the formation of mature lipoproteins. This is Phosphatidylglycerol--prolipoprotein diacylglyceryl transferase from Streptococcus pneumoniae serotype 4 (strain ATCC BAA-334 / TIGR4).